The chain runs to 814 residues: Echinoderm microtubule-associated protein-like 1 (814 aa).

A coiled-coil region spans residues 31–72 (SMEVSDRIASLEQRVQMQEDDIQLLKSALADVVRRLNITEEQ). The disordered stretch occupies residues 77-180 (NRKGPTKARP…ESKPKEPAFS (104 aa)). A compositionally biased stretch (polar residues) spans 92-101 (PLRTTVNNGT). The segment covering 103 to 115 (LPKKPSASLPAPS) has biased composition (low complexity). Positions 127–137 (KSINRTSSSER) are enriched in polar residues. The span at 142-152 (GRRESSGDSKG) shows a compositional bias: basic and acidic residues. Residues 155–167 (NRTGSTSSSSSGK) are compositionally biased toward low complexity. A tandem atypical propeller in EMLs region spans residues 175-814 (KEPAFSPEEG…DTSIMQWRVI (640 aa)). 12 WD repeats span residues 260-309 (EQLQ…IWDS), 314-357 (TLHV…VWDW), 362-399 (RLADVKCSNEAVFAADFHPTDTNIIVTCGKSHLYFWTL), 408-445 (QGLFEKQEKPKFVLCVTFSENGDTITGDSSGNILVWGK), 449-488 (RISYAVQGAHEGGIFALCMLRDGTLVSGGGKDRRLISWNG), 492-529 (KLHKAEIPEQFGPIRTVAEGKGNVILIGTTRNFVLQGT), 534-571 (FTPITQGHTDELWGLAIHASKPQFLTCGHDKHATLWDA), 577-612 (VWDKIIEDPAQSSGFHPSGSVVAVGTLTGRWFVFDT), 616-654 (DLVTVHTDGNEQLSVMRYSPDGNFLAIGSHDNCIYIYGV), 663-700 (RVGKCSGHSSFITHLDWSVNSQFLVSNSGDYEILYWVP), 708-767 (SVET…LFSY), and 774-813 (APSHIYSGHSSHVTNVDFLCEDSHLISTGGKDTSIMQWRV).

Belongs to the WD repeat EMAP family. As to quaternary structure, homotrimer; self-association is mediated by the N-terminal coiled coil. Does not interact with EML3. Binds unpolymerized tubulins via its WD repeat region. Binds repolymerizing microtubules. Interacts with TASOR. In terms of tissue distribution, detected in adult brain cortex, hippocampus and thalamus. Expressed in the stomach, lungs and in Sertoli cells of the testis.

The protein resides in the cytoplasm. Its subcellular location is the perinuclear region. It is found in the cytoskeleton. Its function is as follows. Modulates the assembly and organization of the microtubule cytoskeleton, and probably plays a role in regulating the orientation of the mitotic spindle and the orientation of the plane of cell division. Required for normal proliferation of neuronal progenitor cells in the developing brain and for normal brain development. Does not affect neuron migration per se. This Mus musculus (Mouse) protein is Echinoderm microtubule-associated protein-like 1 (Eml1).